Reading from the N-terminus, the 657-residue chain is MCDQQPIQCCVPIPQCCVKGSSFGPSQFSYANNQVLVEAPCEMKVLECAAPCPVQVSQTACQSSTTEVKGQAPCKTTKGKCQAPCQSKTTQVKYQPKTTEIKCQAPCQTQVSCVQCQAPCQSQVSYVQIPQPPQTYYVECPPVYYTETRYVEYPVSTYMPAPALQPGYTYVECPAVGQGQGQGQGGFSTQYQYQGSYGSCTPQSQSRRSYSSCGPQNQSQASYSYCEPQFQSGPSYTNCGPQRQSQASYGNCTSQLQSRASYSNCSSQRRSGATFSTCAPRCQSQGTYGSYTSQRRSQSTSRCLPPRRLQPSYRSCSPPRHSEPCYSSCLPSRCSSGSYNYCTPPRRSEPIYGSHCPPRGRPSGCSQRCGPKCRVEISSPCCPRQVPPQRCPVQIPPFRGRSQSCPRQPSWGVSCPDLRPRADPHPFPRSCRPQHLDRSPESSRQRCPVPAPRPYPRPQPCPSPEPRPYPRPQPCPSPEPRPRPCPQPCPSPEPRPCPPLRRFSEPCLYPEPCSAPQPVPHPAPRPVPRPRPVHCENPGPRPQPCPLPHPEPMPRPAPCSSPEPCGQPVRCPSPCSGPNPVPYRQELGCHESNPCRLDTEGPRCGSYNFTQRQESNGSCESGDVFSGSHGLSGCGDQGNTCGGMNCGAYGGAKGAYF.

3 disordered regions span residues 285 to 320 (QGTY…SPPR), 425 to 493 (HPFP…PSPE), and 517 to 568 (QPVP…CGQP). Residues 292–302 (TSQRRSQSTSR) show a composition bias toward low complexity. Over residues 434–444 (QHLDRSPESSR) the composition is skewed to basic and acidic residues. Ser442 bears the Phosphoserine mark. 3 stretches are compositionally biased toward pro residues: residues 449–493 (VPAP…PSPE), 517–530 (QPVP…VPRP), and 539–561 (GPRP…PCSS).

It is found in the cytoplasm. The protein is Keratinocyte proline-rich protein of Mus musculus (Mouse).